The following is a 323-amino-acid chain: tRNA dimethylallyltransferase (323 aa).

Residue 12-19 (GPTAAGKT) coordinates ATP. Position 14–19 (14–19 (TAAGKT)) interacts with substrate. 2 interaction with substrate tRNA regions span residues 37–40 (DSAL) and 161–165 (QRLIR).

The protein belongs to the IPP transferase family. In terms of assembly, monomer. It depends on Mg(2+) as a cofactor.

It catalyses the reaction adenosine(37) in tRNA + dimethylallyl diphosphate = N(6)-dimethylallyladenosine(37) in tRNA + diphosphate. Its function is as follows. Catalyzes the transfer of a dimethylallyl group onto the adenine at position 37 in tRNAs that read codons beginning with uridine, leading to the formation of N6-(dimethylallyl)adenosine (i(6)A). The sequence is that of tRNA dimethylallyltransferase from Pseudomonas putida (strain ATCC 700007 / DSM 6899 / JCM 31910 / BCRC 17059 / LMG 24140 / F1).